Here is a 332-residue protein sequence, read N- to C-terminus: DNA-directed RNA polymerase subunit alpha (332 aa).

The segment at 1–230 (MKKITTSAYM…KQMSIFNNVL (230 aa)) is alpha N-terminal domain (alpha-NTD). Residues 246 to 332 (EHSKLLESVE…LRKKISELKS (87 aa)) form an alpha C-terminal domain (alpha-CTD) region.

The protein belongs to the RNA polymerase alpha chain family. In terms of assembly, homodimer. The RNAP catalytic core consists of 2 alpha, 1 beta, 1 beta' and 1 omega subunit. When a sigma factor is associated with the core the holoenzyme is formed, which can initiate transcription.

The catalysed reaction is RNA(n) + a ribonucleoside 5'-triphosphate = RNA(n+1) + diphosphate. Functionally, DNA-dependent RNA polymerase catalyzes the transcription of DNA into RNA using the four ribonucleoside triphosphates as substrates. In Campylobacter fetus subsp. fetus (strain 82-40), this protein is DNA-directed RNA polymerase subunit alpha.